Consider the following 343-residue polypeptide: Farnesyl pyrophosphate synthase (343 aa).

The isopentenyl diphosphate site is built by Lys49, Arg52, and Gln87. Mg(2+)-binding residues include Asp94 and Asp98. Arg103 contacts dimethylallyl diphosphate. Arg104 serves as a coordination point for isopentenyl diphosphate. Dimethylallyl diphosphate is bound by residues Lys191, Thr192, Gln230, Lys247, and Lys256.

This sequence belongs to the FPP/GGPP synthase family. Mg(2+) is required as a cofactor. As to expression, expressed both in apical and sub-apical cells of glandular secretory trichomes.

It localises to the cytoplasm. The protein resides in the nucleus. The catalysed reaction is isopentenyl diphosphate + dimethylallyl diphosphate = (2E)-geranyl diphosphate + diphosphate. It catalyses the reaction isopentenyl diphosphate + (2E)-geranyl diphosphate = (2E,6E)-farnesyl diphosphate + diphosphate. Its pathway is isoprenoid biosynthesis; farnesyl diphosphate biosynthesis; farnesyl diphosphate from geranyl diphosphate and isopentenyl diphosphate: step 1/1. It functions in the pathway sesquiterpene biosynthesis. It participates in isoprenoid biosynthesis; geranyl diphosphate biosynthesis; geranyl diphosphate from dimethylallyl diphosphate and isopentenyl diphosphate: step 1/1. Its function is as follows. Involved in the biosynthesis of the antimalarial endoperoxide artemisinin. Catalyzes the sequential condensation of isopentenyl pyrophosphate with the allylic pyrophosphates, dimethylallyl pyrophosphate, and then with the resultant geranylpyrophosphate to the ultimate product farnesyl pyrophosphate. Promotes anti-malarial and antimicrobial (toward Gram-positive bacteria B.subtilis and S.aureus) activities of plant crude extract probably by triggering artemisinin levels. The chain is Farnesyl pyrophosphate synthase from Artemisia annua (Sweet wormwood).